The following is a 536-amino-acid chain: Caspase recruitment domain-containing protein 9 (536 aa).

Serine 2 is subject to Phosphoserine. Positions 3, 10, and 73 each coordinate Zn(2+). One can recognise a CARD domain in the interval 6–98 (NDDECWSALE…QLYRKVTGKE (93 aa)). A linker region spans residues 99-116 (PARVFSMIIDASGESGLT). Coiled coils occupy residues 117–277 (QLLM…HRNS) and 303–420 (SLRK…QLDM). Lysine 125 participates in a covalent cross-link: Glycyl lysine isopeptide (Lys-Gly) (interchain with G-Cter in ubiquitin). Threonine 231 bears the Phosphothreonine mark. Serine 277 is subject to Phosphoserine. Phosphoserine occurs at positions 424, 425, 431, 451, 461, 483, and 498. Positions 425–451 (SDLEDSSPRNSQELSLPQDLEEDAQLS) are disordered. Positions 472–536 (KHLSQTHDTV…GSDNTDTEGS (65 aa)) are disordered. Residues 487-502 (PPEKERRRLKESFENY) show a composition bias toward basic and acidic residues. 2 positions are modified to phosphothreonine; by CK2: threonine 531 and threonine 533.

As to quaternary structure, monomer. Homodimer; homodimerization is mediated by the CARD domain which forms an extensive interaction with the adjacent linker and coiled-coil regions; leads to an autoinhibited state. Homomultimer; polymerizes following activation, forming a nucleating helical template that seeds BCL10-filament formation via a CARD-CARD interaction. Interacts (via CARD domain) with BCL10 (via CARD domain); interaction takes place following CARD9 activation and polymerization, leading to the formation of a filamentous CBM complex assembly. Component of a CBM complex (CARD9-BCL10, MALT1), composed of CARD9, BCL10 and MALT1. Interacts with RASGRF1. Interacts with NOD2 (via NACHT domain); interaction is direct. Interacts with RIPK2. Interacts with VHL; without leading to protein degradation. In terms of processing, phosphorylated at Thr-231 by PRKCD downstream of C-type lectin receptors activation: phosphorylation promotes interaction with BCL10, followed by activation of NF-kappa-B and MAP kinase p38 pathways. Phosphorylated at Thr-531 and Thr-533 by CK2 following interaction with VHL, leading to inhibit the ability to activate NF-kappa-B. Ubiquitinated at Lys-125 via 'Lys-27'-linked ubiquitin by TRIM62 downstream of C-type lectin receptors activation; leading to CARD9 activation, followed by activation of NF-kappa-B and MAP kinase p38 pathways. Deubiquitinated at Lys-125 by USP15, inhibiting CARD9.

The protein resides in the cytoplasm. With respect to regulation, maintained in an autoinhibited state via homodimerization in which the CARD domain forms an extensive interaction with the adjacent linker and coiled-coil regions. Activation downstream of C-type lectin receptors, by phosphorylation by PRKCD and/or ubiquitination by TRIM62, triggers disruption of the CARD domain-coiled coil interface, CARD9 homooligomerization and BCL10 recruitment, followed by activation of NF-kappa-B and MAP kinase p38 pathways. Zinc-binding inhibits activation by stabilizing the CARD ground-state conformation and restricting its capacity to form BCL10-nucleating filaments. Functionally, adapter protein that plays a key role in innate immune response against fungi by forming signaling complexes downstream of C-type lectin receptors. CARD9-mediated signals are essential for antifungal immunity against a subset of fungi from the phylum Ascomycota. Transduces signals in myeloid cells downstream of C-type lectin receptors CLEC7A (dectin-1), CLEC6A (dectin-2) and CLEC4E (Mincle), which detect pathogen-associated molecular pattern metabolites (PAMPs), such as fungal carbohydrates, and trigger CARD9 activation. Upon activation, CARD9 homooligomerizes to form a nucleating helical template that recruits BCL10 via CARD-CARD interaction, thereby promoting polymerization of BCL10 and subsequent recruitment of MALT1: this leads to activation of NF-kappa-B and MAP kinase p38 (MAPK11, MAPK12, MAPK13 and/or MAPK14) pathways which stimulate expression of genes encoding pro-inflammatory cytokines and chemokines. CARD9 signaling in antigen-presenting cells links innate sensing of fungi to the activation of adaptive immunity and provides a cytokine milieu that induces the development and subsequent of interleukin 17-producing T helper (Th17) cells. Also involved in activation of myeloid cells via classical ITAM-associated receptors and TLR: required for TLR-mediated activation of MAPK, while it is not required for TLR-induced activation of NF-kappa-B. CARD9 can also be engaged independently of BCL10: forms a complex with RASGRF1 downstream of C-type lectin receptors, which recruits and activates HRAS, leading to ERK activation and the production of cytokines. Acts as an important regulator of the intestinal commensal fungi (mycobiota) component of the gut microbiota. Plays an essential role in antifungal immunity against dissemination of gut fungi: acts by promoting induction of antifungal IgG antibodies response in CX3CR1(+) macrophages to confer protection against disseminated C.albicans or C.auris infection. Also mediates immunity against other pathogens, such as certain bacteria, viruses and parasites; CARD9 signaling is however redundant with other innate immune responses. In response to L.monocytogenes infection, required for the production of inflammatory cytokines activated by intracellular peptidoglycan: acts by connecting NOD2 recognition of peptidoglycan to downstream activation of MAP kinases (MAPK) without activating NF-kappa-B. This is Caspase recruitment domain-containing protein 9 from Rattus norvegicus (Rat).